The chain runs to 379 residues: Cobalt-precorrin-5B C(1)-methyltransferase (379 aa).

It belongs to the CbiD family.

It carries out the reaction Co-precorrin-5B + S-adenosyl-L-methionine = Co-precorrin-6A + S-adenosyl-L-homocysteine. It functions in the pathway cofactor biosynthesis; adenosylcobalamin biosynthesis; cob(II)yrinate a,c-diamide from sirohydrochlorin (anaerobic route): step 6/10. Its function is as follows. Catalyzes the methylation of C-1 in cobalt-precorrin-5B to form cobalt-precorrin-6A. The chain is Cobalt-precorrin-5B C(1)-methyltransferase from Salmonella dublin (strain CT_02021853).